A 227-amino-acid chain; its full sequence is Thymidylate synthase (227 aa).

89 to 90 provides a ligand contact to dUMP; sequence RR. Cysteine 109 functions as the Nucleophile in the catalytic mechanism. DUMP is bound by residues 129–132, asparagine 140, and 170–172; these read RSND and HVY. (6R)-5,10-methylene-5,6,7,8-tetrahydrofolate is bound at residue aspartate 132.

Belongs to the thymidylate synthase family. Bacterial-type ThyA subfamily. In terms of assembly, homodimer.

Its subcellular location is the cytoplasm. It carries out the reaction dUMP + (6R)-5,10-methylene-5,6,7,8-tetrahydrofolate = 7,8-dihydrofolate + dTMP. It participates in pyrimidine metabolism; dTTP biosynthesis. Its function is as follows. Catalyzes the reductive methylation of 2'-deoxyuridine-5'-monophosphate (dUMP) to 2'-deoxythymidine-5'-monophosphate (dTMP) while utilizing 5,10-methylenetetrahydrofolate (mTHF) as the methyl donor and reductant in the reaction, yielding dihydrofolate (DHF) as a by-product. This enzymatic reaction provides an intracellular de novo source of dTMP, an essential precursor for DNA biosynthesis. In Bacillus atrophaeus, this protein is Thymidylate synthase.